Consider the following 84-residue polypeptide: CDC42 small effector protein 2-A (84 aa).

S-palmitoyl cysteine attachment occurs at residues Cys-10 and Cys-11. The 14-residue stretch at 29-42 folds into the CRIB domain; it reads IGEPTNFVHTAHVG.

It belongs to the CDC42SE/SPEC family.

It is found in the cytoplasm. It localises to the cytoskeleton. Its subcellular location is the cell membrane. Probably involved in the organization of the actin cytoskeleton by acting downstream of CDC42, inducing actin filament assembly. In Xenopus tropicalis (Western clawed frog), this protein is CDC42 small effector protein 2-A (cdc42se2-A).